We begin with the raw amino-acid sequence, 325 residues long: Protease HtpX homolog (325 aa).

A helical transmembrane segment spans residues 20-40 (IGYLLGGGGGMMIALVIAVAM). Histidine 130 provides a ligand contact to Zn(2+). Glutamate 131 is an active-site residue. Histidine 134 contacts Zn(2+). Transmembrane regions (helical) follow at residues 145–165 (IVATLAGAISMLGNFAFFLGG) and 173–193 (VMGVVGTLLAMIVAPFGAMIV). Residue glutamate 202 coordinates Zn(2+). The interval 288–325 (AMTARAAAPSQNSGPWGQRSDNAGGNSNGGSRYRGPWS) is disordered. Positions 306 to 325 (RSDNAGGNSNGGSRYRGPWS) are enriched in low complexity.

Belongs to the peptidase M48B family. Zn(2+) serves as cofactor.

The protein localises to the cell inner membrane. This is Protease HtpX homolog from Brucella abortus (strain S19).